A 3388-amino-acid polypeptide reads, in one-letter code: Genome polyprotein (3388 aa).

An interaction with host EXOC1 region spans residues 1–15 (MNDQRKKARNTPFNM). Residues 1 to 101 (MNDQRKKARN…LNILNRRRRT (101 aa)) lie on the Cytoplasmic side of the membrane. A hydrophobic; homodimerization of capsid protein C region spans residues 37-72 (MLQGRGPLKLFMALVAFLRFLTIPPTAGILKRWGTI). The propeptide at 101–114 (TAGMIIMLIPTVMA) is ER anchor for the capsid protein C, removed in mature form by serine protease NS3. Residues 102 to 122 (AGMIIMLIPTVMAFHLTTRNG) traverse the membrane as a helical segment. Topologically, residues 123–238 (EPHMIVSRQE…GAWKHAQRIE (116 aa)) are extracellular. The N-linked (GlcNAc...) asparagine; by host glycan is linked to Asn-183. The helical transmembrane segment at 239–259 (TWILRHPGFTIMAAILAYTIG) threads the bilayer. Residues 260-265 (TTHFQR) are Cytoplasmic-facing. A helical transmembrane segment spans residues 266-280 (VLIFILLTAIAPSMT). Over 281-725 (MRCIGISNRD…LHQVFGAIYG (445 aa)) the chain is Extracellular. Cystine bridges form between Cys-283/Cys-310, Cys-340/Cys-401, Cys-354/Cys-385, and Cys-372/Cys-396. N-linked (GlcNAc...) asparagine; by host glycosylation is present at Asn-347. A fusion peptide region spans residues 378 to 391 (DRGWGNGCGLFGKG). A glycan (N-linked (GlcNAc...) asparagine; by host) is linked at Asn-433. 2 disulfide bridges follow: Cys-465–Cys-565 and Cys-582–Cys-613. The chain crosses the membrane as a helical span at residues 726–746 (AAFSGVSWTMKILIGVIITWI). At 747–752 (GMNSRS) the chain is on the cytoplasmic side. The helical transmembrane segment at 753–773 (TSLSVSLVLVGIVTLYLGVMV) threads the bilayer. At 774–1195 (QADSGCVVSW…MVGATMTDDI (422 aa)) the chain is on the extracellular side. Intrachain disulfides connect Cys-779/Cys-790, Cys-830/Cys-918, Cys-954/Cys-998, Cys-1055/Cys-1104, Cys-1066/Cys-1088, and Cys-1087/Cys-1091. 2 N-linked (GlcNAc...) asparagine; by host glycosylation sites follow: Asn-905 and Asn-982. The N-linked (GlcNAc...) asparagine; by host glycan is linked to Asn-1134. A helical transmembrane segment spans residues 1196 to 1220 (GMGVTYLALLAAFKVRPTFAAGLLL). Topologically, residues 1221-1226 (RKLTSK) are cytoplasmic. The chain crosses the membrane as a helical span at residues 1227–1245 (ELMMTTIGIVLLSQSSIPE). Over 1246 to 1269 (TILELTDALALGMMVLKMVRNMEK) the chain is Lumenal. A helical transmembrane segment spans residues 1270–1290 (YQLAVTIMAILCVPNAVILQN). Residue Ala-1291 is a topological domain, cytoplasmic. Residues 1292–1310 (WKVSCTILAVVSVSPLFLT) traverse the membrane as a helical segment. The Lumenal segment spans residues 1311 to 1317 (SSQQKAD). Residues 1318 to 1338 (WIPLALTIKGLNPTAIFLTTL) form a helical membrane-spanning segment. At 1339–1346 (SRTSKKRS) the chain is on the cytoplasmic side. The helical transmembrane segment at 1347 to 1367 (WPLNEAIMAVGMVSILASSLL) threads the bilayer. Topologically, residues 1368–1370 (KND) are lumenal. Residues 1371–1391 (TPMTGPLVAGGLLTVCYVLTG) traverse the membrane as a helical segment. The Cytoplasmic portion of the chain corresponds to 1392 to 1447 (RSADLELERATDVKWDDQAEISGSSPILSITISEDGSMSIKNEEEEQTLTILIRTG). Residues 1398 to 1437 (LERATDVKWDDQAEISGSSPILSITISEDGSMSIKNEEEE) form an interacts with and activates NS3 protease region. The segment at residues 1448 to 1468 (LLVISGLFPVSIPITAAAWYL) is an intramembrane region (helical). Topologically, residues 1469-2144 (WEVKKQRAGV…LSELPETLET (676 aa)) are cytoplasmic. The 178-residue stretch at 1476-1653 (AGVLWDVPSP…EKSIEDNPEI (178 aa)) folds into the Peptidase S7 domain. Catalysis depends on charge relay system; for serine protease NS3 activity residues His-1526, Asp-1550, and Ser-1610. One can recognise a Helicase ATP-binding domain in the interval 1655–1811 (DDIFRKRRLT…QSNAPIMDEE (157 aa)). The interval 1659–1662 (RKRR) is important for RNA-binding. An ATP-binding site is contributed by 1668 to 1675 (LHPGAGKT). Residues 1759 to 1762 (DEAH) carry the DEAH box motif. One can recognise a Helicase C-terminal domain in the interval 1821-1988 (SGHEWVTDFK…IIPSMFEPER (168 aa)). The residue at position 1863 (Lys-1863) is an N6-acetyllysine; by host. Residues 2145–2165 (LLLLTLLATVTGGIFLFLMSG) traverse the membrane as a helical segment. Residues 2166–2167 (RG) are Lumenal-facing. Positions 2168–2188 (IGKMTLGMCCIITASILLWYA) form an intramembrane region, helical. A topological domain (lumenal) is located at residue Gln-2189. A helical membrane pass occupies residues 2190–2210 (IQPHWIAASIILEFFLIVLLI). Topologically, residues 2211-2225 (PEPEKQRTPQDNQLT) are cytoplasmic. A helical transmembrane segment spans residues 2226–2246 (YVIIAILTVVAATMANEMGFL). Residues 2247-2271 (EKTKKDLGLGNIATQQPESNILDID) are Lumenal-facing. Residues 2272–2292 (LRPASAWTLYAVATTFITPML) constitute an intramembrane region (helical). Over 2293–2313 (RHSIENSSVNVSLTAIANQAT) the chain is Lumenal. 2 N-linked (GlcNAc...) asparagine; by host glycosylation sites follow: Asn-2298 and Asn-2302. The helical intramembrane region spans 2314-2334 (VLMGLGKGWPLSKMDIGVPLL). Residues 2335–2344 (AIGCYSQVNP) are Lumenal-facing. Residues 2345–2365 (ITLTAALLLLVAHYAIIGPGL) traverse the membrane as a helical segment. Topologically, residues 2366-2410 (QAKATREAQKRAAAGIMKNPTVDGITVIDLDPIPYDPKFEKQLGQ) are cytoplasmic. Residues 2411–2431 (VMLLVLCVTQVLMMRTTWALC) form a helical membrane-spanning segment. At 2432-2456 (EALTLATGPVSTLWEGNPGRFWNTT) the chain is on the lumenal side. Residue Asn-2454 is glycosylated (N-linked (GlcNAc...) asparagine; by host). A helical transmembrane segment spans residues 2457 to 2477 (IAVSMANIFRGSYLAGAGLLF). The Cytoplasmic portion of the chain corresponds to 2478–3388 (SIMKNTTSTR…REEEEAGVLW (911 aa)). One can recognise an mRNA cap 0-1 NS5-type MT domain in the interval 2490 to 2752 (TGNIGETLGE…DVDLGSGTRN (263 aa)). An S-adenosyl-L-methionine-binding site is contributed by Ser-2544. Ser-2544 bears the Phosphoserine mark. Catalysis depends on Lys-2549, which acts as the For 2'-O-MTase activity. Positions 2565–2568 (VVDL) match the SUMO-interacting motif motif. Residues Gly-2574, Trp-2575, Thr-2592, Lys-2593, Asp-2619, and Val-2620 each coordinate S-adenosyl-L-methionine. Asp-2634 (for 2'-O-MTase activity) is an active-site residue. Residue Ile-2635 participates in S-adenosyl-L-methionine binding. Residues Lys-2669 and Glu-2705 each act as for 2'-O-MTase activity in the active site. Tyr-2707 provides a ligand contact to S-adenosyl-L-methionine. 4 residues coordinate Zn(2+): Glu-2926, His-2930, Cys-2935, and Cys-2938. In terms of domain architecture, RdRp catalytic spans 3017–3166 (AMYADDTAGW…PLDDRFARAL (150 aa)). Residues His-3200, Cys-3216, and Cys-3335 each contribute to the Zn(2+) site.

This sequence in the N-terminal section; belongs to the class I-like SAM-binding methyltransferase superfamily. mRNA cap 0-1 NS5-type methyltransferase family. As to quaternary structure, homodimer. Interacts (via N-terminus) with host EXOC1 (via C-terminus); this interaction results in EXOC1 degradation through the proteasome degradation pathway. In terms of assembly, forms heterodimers with envelope protein E in the endoplasmic reticulum and Golgi. Homodimer; in the endoplasmic reticulum and Golgi. Interacts with protein prM. Interacts with non-structural protein 1. As to quaternary structure, homodimer; Homohexamer when secreted. Interacts with envelope protein E. Interacts with host PRKAA1. In terms of assembly, interacts (via N-terminus) with serine protease NS3. Forms a heterodimer with serine protease NS3. May form homooligomers. As to quaternary structure, forms a heterodimer with NS2B. Interacts with NS4B. Interacts with unphosphorylated RNA-directed RNA polymerase NS5; this interaction stimulates RNA-directed RNA polymerase NS5 guanylyltransferase activity. Interacts with host SHFL. In terms of assembly, interacts with host MAVS; this interaction inhibits the synthesis of IFN-beta. Interacts with host SHFL. Interacts with host AUP1; the interaction occurs in the presence of Dengue virus NS4B and induces lipophagy which facilitates production of virus progeny particles. May interact with host SRPRA and SEC61G. Interacts with serine protease NS3. As to quaternary structure, homodimer. Interacts with host STAT2; this interaction inhibits the phosphorylation of the latter, and, when all viral proteins are present (polyprotein), targets STAT2 for degradation. Interacts with serine protease NS3. Interacts with host PAF1 complex; the interaction may prevent the recruitment of the PAF1 complex to interferon-responsive genes, and thus reduces the immune response. Post-translationally, specific enzymatic cleavages in vivo yield mature proteins. Cleavages in the lumen of endoplasmic reticulum are performed by host signal peptidase, whereas cleavages in the cytoplasmic side are performed by serine protease NS3. Signal cleavage at the 2K-4B site requires a prior NS3 protease-mediated cleavage at the 4A-2K site. Cleaved in post-Golgi vesicles by a host furin, releasing the mature small envelope protein M, and peptide pr. This cleavage is incomplete as up to 30% of viral particles still carry uncleaved prM. In terms of processing, N-glycosylated. Post-translationally, N-glycosylated. The excreted form is glycosylated and this is required for efficient secretion of the protein from infected cells. Acetylated by host KAT5. Acetylation modulates NS3 RNA-binding and unwinding activities and plays an important positive role for viral replication. In terms of processing, sumoylation of RNA-directed RNA polymerase NS5 increases NS5 protein stability allowing proper viral RNA replication. Post-translationally, phosphorylated on serines residues. This phosphorylation may trigger NS5 nuclear localization.

The protein localises to the virion. It localises to the host nucleus. It is found in the host cytoplasm. The protein resides in the host perinuclear region. Its subcellular location is the secreted. The protein localises to the virion membrane. It localises to the host endoplasmic reticulum membrane. It is found in the host mitochondrion. It catalyses the reaction Selective hydrolysis of -Xaa-Xaa-|-Yaa- bonds in which each of the Xaa can be either Arg or Lys and Yaa can be either Ser or Ala.. The catalysed reaction is RNA(n) + a ribonucleoside 5'-triphosphate = RNA(n+1) + diphosphate. It carries out the reaction a ribonucleoside 5'-triphosphate + H2O = a ribonucleoside 5'-diphosphate + phosphate + H(+). The enzyme catalyses ATP + H2O = ADP + phosphate + H(+). It catalyses the reaction a 5'-end (5'-triphosphoguanosine)-ribonucleoside in mRNA + S-adenosyl-L-methionine = a 5'-end (N(7)-methyl 5'-triphosphoguanosine)-ribonucleoside in mRNA + S-adenosyl-L-homocysteine. The catalysed reaction is a 5'-end (N(7)-methyl 5'-triphosphoguanosine)-ribonucleoside in mRNA + S-adenosyl-L-methionine = a 5'-end (N(7)-methyl 5'-triphosphoguanosine)-(2'-O-methyl-ribonucleoside) in mRNA + S-adenosyl-L-homocysteine + H(+). Plays a role in virus budding by binding to the cell membrane and gathering the viral RNA into a nucleocapsid that forms the core of a mature virus particle. During virus entry, may induce genome penetration into the host cytoplasm after hemifusion induced by the surface proteins. Can migrate to the cell nucleus where it modulates host functions. Overcomes the anti-viral effects of host EXOC1 by sequestering and degrading the latter through the proteasome degradation pathway. Its function is as follows. Inhibits RNA silencing by interfering with host Dicer. Functionally, prevents premature fusion activity of envelope proteins in trans-Golgi by binding to envelope protein E at pH6.0. After virion release in extracellular space, gets dissociated from E dimers. In terms of biological role, acts as a chaperone for envelope protein E during intracellular virion assembly by masking and inactivating envelope protein E fusion peptide. prM is the only viral peptide matured by host furin in the trans-Golgi network probably to avoid catastrophic activation of the viral fusion activity in acidic Golgi compartment prior to virion release. prM-E cleavage is inefficient, and many virions are only partially matured. These uncleaved prM would play a role in immune evasion. May play a role in virus budding. Exerts cytotoxic effects by activating a mitochondrial apoptotic pathway through M ectodomain. May display a viroporin activity. Its function is as follows. Binds to host cell surface receptor and mediates fusion between viral and cellular membranes. Envelope protein is synthesized in the endoplasmic reticulum in the form of heterodimer with protein prM. They play a role in virion budding in the ER, and the newly formed immature particle is covered with 60 spikes composed of heterodimer between precursor prM and envelope protein E. The virion is transported to the Golgi apparatus where the low pH causes dissociation of PrM-E heterodimers and formation of E homodimers. prM-E cleavage is inefficient, and many virions are only partially matured. These uncleaved prM would play a role in immune evasion. Functionally, involved in immune evasion, pathogenesis and viral replication. Once cleaved off the polyprotein, is targeted to three destinations: the viral replication cycle, the plasma membrane and the extracellular compartment. Essential for viral replication. Required for formation of the replication complex and recruitment of other non-structural proteins to the ER-derived membrane structures. Excreted as a hexameric lipoparticle that plays a role against host immune response. Antagonizing the complement function. Binds to the host macrophages and dendritic cells. Inhibits signal transduction originating from Toll-like receptor 3 (TLR3). Mediates complement activation, which may contribute to the pathogenesis of the vascular leakage that occurs in severe dengue disease. Activates autophagy through the AMPK/ERK/mTOR signaling pathway. Mechanistically, acts as the assembly platform for STK11-AMPK interactions and promotes STK11-AMPK interactions. In turn, promotes phosphorylation of the AMPK kinase structural domain and activates AMPK, thereby positively regulating the AMPK/ERK/mTOR signaling pathway and inducing autophagy. In terms of biological role, disrupts the host endothelial glycocalyx layer of host pulmonary microvascular endothelial cells, inducing degradation of sialic acid and shedding of heparan sulfate proteoglycans. NS1 induces expression of sialidases, heparanase, and activates cathepsin L, which activates heparanase via enzymatic cleavage. These effects are probably linked to the endothelial hyperpermeability observed in severe dengue disease. Component of the viral RNA replication complex that functions in virion assembly and antagonizes the host immune response. Its function is as follows. Required cofactor for the serine protease function of NS3. May have membrane-destabilizing activity and form viroporins. Functionally, displays three enzymatic activities: serine protease, NTPase and RNA helicase. NS3 serine protease, in association with NS2B, performs its autocleavage and cleaves the polyprotein at dibasic sites in the cytoplasm: C-prM, NS2A-NS2B, NS2B-NS3, NS3-NS4A, NS4A-2K and NS4B-NS5. NS3 RNA helicase binds RNA and unwinds dsRNA in the 3' to 5' direction. In terms of biological role, regulates the ATPase activity of the NS3 helicase activity. NS4A allows NS3 helicase to conserve energy during unwinding. Plays a role in the inhibition of the host innate immune response. Interacts with host MAVS and thereby prevents the interaction between RIGI and MAVS. In turn, IFN-beta production is impaired. Interacts with host AUP1 which mediates induction of lipophagy in host cells and facilitates production of virus progeny particles. Functions as a signal peptide for NS4B and is required for the interferon antagonism activity of the latter. Its function is as follows. Induces the formation of ER-derived membrane vesicles where the viral replication takes place. Inhibits interferon (IFN)-induced host STAT1 phosphorylation and nuclear translocation, thereby preventing the establishment of cellular antiviral state by blocking the IFN-alpha/beta pathway. Functionally, replicates the viral (+) and (-) RNA genome, and performs the capping of genomes in the cytoplasm. NS5 methylates viral RNA cap at guanine N-7 and ribose 2'-O positions. Besides its role in RNA genome replication, also prevents the establishment of cellular antiviral state by blocking the interferon-alpha/beta (IFN-alpha/beta) signaling pathway. Inhibits host TYK2 and STAT2 phosphorylation, thereby preventing activation of JAK-STAT signaling pathway. May reduce immune responses by preventing the recruitment of the host PAF1 complex to interferon-responsive genes. In Aedimorphus (Red guenon), this protein is Genome polyprotein.